The chain runs to 54 residues: Califin-C (54 aa).

A disulfide bond links C25 and C53. L36 carries the leucine amide modification.

This sequence belongs to the molluscan ELH family. This protein consists of a large 36-residue subunit, bound by a single disulfide-bond to a small 18-residue subunit.

Its subcellular location is the secreted. Functionally, injected in sexually mature animals califin C excites LB and LC cells of the abdominal ganglion and cause egg-laying. This Aplysia californica (California sea hare) protein is Califin-C.